A 93-amino-acid polypeptide reads, in one-letter code: Cell division topological specificity factor (93 aa).

The protein belongs to the MinE family.

Functionally, prevents the cell division inhibition by proteins MinC and MinD at internal division sites while permitting inhibition at polar sites. This ensures cell division at the proper site by restricting the formation of a division septum at the midpoint of the long axis of the cell. This Syntrophus aciditrophicus (strain SB) protein is Cell division topological specificity factor.